The chain runs to 242 residues: Probable transcriptional regulatory protein LBA0733 (242 aa).

The segment at 1–22 (MSGHSKWHNIQGRKNAQDAKRG) is disordered.

Belongs to the TACO1 family.

The protein localises to the cytoplasm. This Lactobacillus acidophilus (strain ATCC 700396 / NCK56 / N2 / NCFM) protein is Probable transcriptional regulatory protein LBA0733.